Consider the following 164-residue polypeptide: 6,7-dimethyl-8-ribityllumazine synthase (164 aa).

5-amino-6-(D-ribitylamino)uracil is bound by residues tyrosine 27, 58 to 60 (ALE), and 87 to 89 (CVI). Residue 92 to 93 (ET) participates in (2S)-2-hydroxy-3-oxobutyl phosphate binding. Catalysis depends on histidine 95, which acts as the Proton donor. Position 120 (asparagine 120) interacts with 5-amino-6-(D-ribitylamino)uracil. Arginine 134 provides a ligand contact to (2S)-2-hydroxy-3-oxobutyl phosphate.

This sequence belongs to the DMRL synthase family.

The catalysed reaction is (2S)-2-hydroxy-3-oxobutyl phosphate + 5-amino-6-(D-ribitylamino)uracil = 6,7-dimethyl-8-(1-D-ribityl)lumazine + phosphate + 2 H2O + H(+). The protein operates within cofactor biosynthesis; riboflavin biosynthesis; riboflavin from 2-hydroxy-3-oxobutyl phosphate and 5-amino-6-(D-ribitylamino)uracil: step 1/2. Its function is as follows. Catalyzes the formation of 6,7-dimethyl-8-ribityllumazine by condensation of 5-amino-6-(D-ribitylamino)uracil with 3,4-dihydroxy-2-butanone 4-phosphate. This is the penultimate step in the biosynthesis of riboflavin. The sequence is that of 6,7-dimethyl-8-ribityllumazine synthase from Methylocella silvestris (strain DSM 15510 / CIP 108128 / LMG 27833 / NCIMB 13906 / BL2).